Here is a 334-residue protein sequence, read N- to C-terminus: Glycerol-3-phosphate dehydrogenase [NAD(P)+] (334 aa).

NADPH is bound by residues W13, R33, and K106. K106, G137, and S139 together coordinate sn-glycerol 3-phosphate. A141 contributes to the NADPH binding site. K192, D245, S255, R256, and N257 together coordinate sn-glycerol 3-phosphate. K192 (proton acceptor) is an active-site residue. Position 256 (R256) interacts with NADPH. Positions 280 and 282 each coordinate NADPH.

This sequence belongs to the NAD-dependent glycerol-3-phosphate dehydrogenase family.

The protein localises to the cytoplasm. The catalysed reaction is sn-glycerol 3-phosphate + NAD(+) = dihydroxyacetone phosphate + NADH + H(+). It carries out the reaction sn-glycerol 3-phosphate + NADP(+) = dihydroxyacetone phosphate + NADPH + H(+). The protein operates within membrane lipid metabolism; glycerophospholipid metabolism. Catalyzes the reduction of the glycolytic intermediate dihydroxyacetone phosphate (DHAP) to sn-glycerol 3-phosphate (G3P), the key precursor for phospholipid synthesis. In Chlamydia abortus (strain DSM 27085 / S26/3) (Chlamydophila abortus), this protein is Glycerol-3-phosphate dehydrogenase [NAD(P)+].